A 301-amino-acid polypeptide reads, in one-letter code: MANLRDIRKKIGSVKNTQKITHAMKLVSTSKLRKAEEVARNSRAYALKLDAVFDDVLSKMKNQGIKDIQSKYFRELERLEIKKVDIIFITADKGLCGGFNANTIKKVLACTNEYQEKDIKVRLRGIGKKGNEYFSFNGIEVLDKINDLSSMPNYERAQEFMQKVVEDYLNGKTDKVVIIHNGFKNMIIQEIRVKTILPIGHHIIHQNSQPSEAQETITSEPSGSEDEILDSLAKKYVEYSLYYALIDSLAAEHSARMQAMDTATNNAKDLVKNLTISYNKARQEAITTELVEINAGVEALK.

Belongs to the ATPase gamma chain family. In terms of assembly, F-type ATPases have 2 components, CF(1) - the catalytic core - and CF(0) - the membrane proton channel. CF(1) has five subunits: alpha(3), beta(3), gamma(1), delta(1), epsilon(1). CF(0) has three main subunits: a, b and c.

The protein resides in the cell inner membrane. Functionally, produces ATP from ADP in the presence of a proton gradient across the membrane. The gamma chain is believed to be important in regulating ATPase activity and the flow of protons through the CF(0) complex. In Helicobacter acinonychis (strain Sheeba), this protein is ATP synthase gamma chain.